A 299-amino-acid polypeptide reads, in one-letter code: pH-regulated antigen PRA1 (299 aa).

The signal sequence occupies residues 1 to 15 (MNYLLFCLFFAFSVA). Residues N48, N89, N135, and N208 are each glycosylated (N-linked (GlcNAc...) asparagine). The tract at residues 253-299 (FEDSDSGSDSGASSTASSSHQHTDSNPSATTDANSHCHTHADGEVHC) is disordered. Low complexity predominate over residues 259 to 272 (GSDSGASSTASSSH). A compositionally biased stretch (polar residues) spans 278-288 (NPSATTDANSH).

Belongs to the ZPS1 family. Component of a multiprotein complex of 250 kDa composed of at least HYR1, MP65, and PRA1. Interacts with host Integrin alpha-M/beta-2 heterodimer. Also binds human factor H (CFH), CFHR1, plasminogen (PLG), complement C3, and C4BPA. Interacts with ZRT101. Post-translationally, N- and O-glycosylated. The N- and 0-glycosidically linked carbohydrates represent 18 to 20 percent and 3 to 4 percent, respectively, of the molecular mass of PRA1. 0-linked sugar residues may be involved in the interaction with fibrinogen. Contributes highly to the carbohydrate component of the matrix. Treatment with tunicamycin impairs glycosylation.

It is found in the secreted. Cell surface protein involved in the host-parasite interaction during candidal infection. With MP65, represents a major component of the biofilm matrix. As a surface protein, binds the two human complement regulators CFH and CFHR1, as well as plasminogen PLG, mediates complement evasion and extra-cellular matrix interaction and/or degradation. As a released protein, enhances complement control in direct vicinity of the yeast and thus generates an additional protective layer which controls host complement attack, assisting the fungus in escaping host surveillance. Binds to host fluid-phase C3 and blocks cleavage of C3 to C3a and C3b, leading to inhibition of complement activation and protection from uptake of C.albicans by human macrophages. Also mediates human complement control and complement evasion through binding to C4BPA, another human complement inhibitor, as well as through binding to host integrin alpha-M/beta-2. Binds zinc from its environment and then reassociates with ZRT1 to acquire this essential metal. The protein is pH-regulated antigen PRA1 of Candida albicans (strain SC5314 / ATCC MYA-2876) (Yeast).